The following is a 31-amino-acid chain: Cyclotide hyen-I (31 aa).

Residues 1 to 31 constitute a cross-link (cyclopeptide (Gly-Asp)); the sequence is GSTPCGESCVWIPCISGIVGCSCSNKVCYMD. 3 cysteine pairs are disulfide-bonded: Cys-5–Cys-21, Cys-9–Cys-23, and Cys-14–Cys-28.

Post-translationally, this is a cyclic peptide. In terms of tissue distribution, detected in seeds (at protein level).

In terms of biological role, probably participates in a plant defense mechanism. The sequence is that of Cyclotide hyen-I from Pigea enneasperma (Spade flower).